The chain runs to 81 residues: Photosystem I iron-sulfur center (81 aa).

2 consecutive 4Fe-4S ferredoxin-type domains span residues 1–31 (MSHKVKIYDTCIGCTQCVRACPLDVLEMVPW) and 39–68 (IASSPRTEDCVGCKRCETACPTDFLSIRVY). [4Fe-4S] cluster contacts are provided by Cys11, Cys14, Cys17, Cys21, Cys48, Cys51, Cys54, and Cys58.

The cyanobacterial PSI reaction center is composed of one copy each of PsaA,B,C,D,E,F,I,J,K,L,M and X, and forms trimeric complexes. Requires [4Fe-4S] cluster as cofactor.

It is found in the cellular thylakoid membrane. It carries out the reaction reduced [plastocyanin] + hnu + oxidized [2Fe-2S]-[ferredoxin] = oxidized [plastocyanin] + reduced [2Fe-2S]-[ferredoxin]. Functionally, apoprotein for the two 4Fe-4S centers FA and FB of photosystem I (PSI); essential for photochemical activity. FB is the terminal electron acceptor of PSI, donating electrons to ferredoxin. The C-terminus interacts with PsaA/B/D and helps assemble the protein into the PSI complex. Required for binding of PsaD and PsaE to PSI. PSI is a plastocyanin/cytochrome c6-ferredoxin oxidoreductase, converting photonic excitation into a charge separation, which transfers an electron from the donor P700 chlorophyll pair to the spectroscopically characterized acceptors A0, A1, FX, FA and FB in turn. The protein is Photosystem I iron-sulfur center of Crocosphaera subtropica (strain ATCC 51142 / BH68) (Cyanothece sp. (strain ATCC 51142)).